The primary structure comprises 440 residues: Tetratricopeptide repeat protein 5 (440 aa).

TPR repeat units lie at residues 7–61 (EEVK…EEVV), 68–98 (AQVLMLTGKALNVTPDYSPKAEELLSKAVKL), 103–130 (VEAWNQLGEVYWKKGDVAAAHTCFSGAL), 136–174 (KVSLQNLSMVLRQLRTDSGDEHSRHVMDSVRQAKLAVQM), and 179–216 (GRSWYILGNAYLSLYFNTGQNPKISQQALSAYAQAEKV). The Nuclear export signal motif lies at 13-24 (LQKLQELVDQLY). Ser203 is modified (phosphoserine; by ATM). A Phosphoserine; by CHEK2 modification is found at Ser221. One copy of the TPR 6 repeat lies at 224–253 (PDLHLNRATLHKYEENYGEALEGFSRAAAL). The tract at residues 285–287 (KTK) is mediates interaction with 28S rRNA of ribosome-coding tubulin.

In terms of assembly, interacts with JMY and p300/EP300; the interaction occurs in the nucleus and augments the association between JMY and p300/EP300 in response to DNA damage. Interacts with PRMT5; the interaction is DNA damage-dependent and promotes PRMT5 interaction with p53/TP53 and subsequent methylation. Forms a complex with HSF1 and p300/EP300; these interactions augment chromatin-bound HSF1 and p300/EP300 histone acetyltransferase activity, resulting in enhanced heat-shock-responsive transcription. Interacts with JMY; the interaction occurs in the cytoplasm and results in the inhibition of JYM's nucleation activity. Interacts with ribosome-coding tubulin (via 60S subunit 28S rRNA and protein uL24/RPL26) and the N-terminal of nascent tubulin polypeptide (via alpha-tubulin MREC motif and beta-tubulin MREI motif); these interactions result in tubulin mRNA-targeted degradation. Interacts with ATP5F1B; the interaction occurs in the mitochondria and results in ATP production decrease. Interacts with p53/TP53; the interaction occurs in the mitochondria and results in increased apoptosis. Phosphorylation by ATM kinase induces nuclear accumulation while interfering with nuclear export, and phosphorylation by CHEK2 kinase enhances nuclear stability.

It localises to the nucleus. Its subcellular location is the cytoplasm. The protein resides in the cytoplasmic vesicle. It is found in the mitochondrion matrix. Functionally, cofactor involved in the regulation of various cellular mechanisms such as actin regulation, autophagy, chromatin regulation and DNA repair. In physiological conditions, interacts with cofactor JMY in the cytoplasm which prevents JMY's actin nucleation activity and ability to activate the Arp2/3 complex. Acts as a negative regulator of nutrient stress-induced autophagy by inhibiting JMY's interaction with MAP1LC3B, thereby preventing autophagosome formation. Involves in tubulin autoregulation by promoting its degradation in response to excess soluble tubulin. To do so, associates with the active ribosome near the ribosome exit tunnel and with nascent tubulin polypeptides early during their translation, triggering tubulin mRNA-targeted degradation. Following DNA damage, phosphorylated by DNA damage responsive protein kinases ATM and CHEK2, leading to its nuclear accumulation and stability. Nuclear TTC5/STRAP promotes the assembly of a stress-responsive p53/TP53 coactivator complex, which includes the coactivators JMY and p300, thereby increasing p53/TP53-dependent transcription and apoptosis. Also recruits arginine methyltransferase PRMT5 to p53/TP53 when DNA is damaged, allowing PRMT5 to methylate p53/TP53. In DNA stress conditions, also prevents p53/TP53 degradation by E3 ubiquitin ligase MDM2. Upon heat-shock stress, forms a chromatin-associated complex with heat-shock factor 1 HSF1 and p300/EP300 to stimulate heat-shock-responsive transcription, thereby increasing cell survival. Mitochondrial TTC5/STRAP interacts with ATP synthase subunit beta ATP5F1B which decreased ATP synthase activity and lowers mitochondrial ATP production, thereby regulating cellular respiration and mitochondrial-dependent apoptosis. Mitochondrial TTC5/STRAP also regulates p53/TP53-mediated apoptosis. This is Tetratricopeptide repeat protein 5 (TTC5) from Bos taurus (Bovine).